A 418-amino-acid chain; its full sequence is NADH-quinone oxidoreductase subunit D (418 aa).

It belongs to the complex I 49 kDa subunit family. NDH-1 is composed of 14 different subunits. Subunits NuoB, C, D, E, F, and G constitute the peripheral sector of the complex.

It localises to the cell inner membrane. The enzyme catalyses a quinone + NADH + 5 H(+)(in) = a quinol + NAD(+) + 4 H(+)(out). In terms of biological role, NDH-1 shuttles electrons from NADH, via FMN and iron-sulfur (Fe-S) centers, to quinones in the respiratory chain. The immediate electron acceptor for the enzyme in this species is believed to be ubiquinone. Couples the redox reaction to proton translocation (for every two electrons transferred, four hydrogen ions are translocated across the cytoplasmic membrane), and thus conserves the redox energy in a proton gradient. This is NADH-quinone oxidoreductase subunit D from Bordetella avium (strain 197N).